A 497-amino-acid polypeptide reads, in one-letter code: Glucose-6-phosphate isomerase (497 aa).

Residue Glu350 is the Proton donor of the active site. Residues His381 and Lys485 contribute to the active site.

The protein belongs to the GPI family.

Its subcellular location is the cytoplasm. The catalysed reaction is alpha-D-glucose 6-phosphate = beta-D-fructose 6-phosphate. It participates in carbohydrate biosynthesis; gluconeogenesis. The protein operates within carbohydrate degradation; glycolysis; D-glyceraldehyde 3-phosphate and glycerone phosphate from D-glucose: step 2/4. Functionally, catalyzes the reversible isomerization of glucose-6-phosphate to fructose-6-phosphate. The sequence is that of Glucose-6-phosphate isomerase from Legionella pneumophila.